The primary structure comprises 186 residues: Threonylcarbamoyl-AMP synthase (186 aa).

A YrdC-like domain is found at 5–186 (TQSINDAVKC…DAITGEILRL (182 aa)).

This sequence belongs to the SUA5 family. TsaC subfamily.

The protein localises to the cytoplasm. It carries out the reaction L-threonine + hydrogencarbonate + ATP = L-threonylcarbamoyladenylate + diphosphate + H2O. In terms of biological role, required for the formation of a threonylcarbamoyl group on adenosine at position 37 (t(6)A37) in tRNAs that read codons beginning with adenine. Catalyzes the conversion of L-threonine, HCO(3)(-)/CO(2) and ATP to give threonylcarbamoyl-AMP (TC-AMP) as the acyladenylate intermediate, with the release of diphosphate. The protein is Threonylcarbamoyl-AMP synthase of Coxiella burnetii (strain RSA 331 / Henzerling II).